We begin with the raw amino-acid sequence, 2378 residues long: Dimodular nonribosomal peptide synthase (2378 aa).

Carrier domains are found at residues 961-1036 (APRT…DLAQ) and 2036-2111 (GPRT…EMGS). 2 positions are modified to O-(pantetheine 4'-phosphoryl)serine: Ser-996 and Ser-2071.

It belongs to the ATP-dependent AMP-binding enzyme family. Pantetheine 4'-phosphate is required as a cofactor.

The catalysed reaction is holo-[peptidyl-carrier protein] + L-threonine + ATP = L-threonyl-[peptidyl-carrier protein] + AMP + diphosphate. The enzyme catalyses holo-[peptidyl-carrier protein] + glycine + ATP = glycyl-[peptidyl-carrier protein] + AMP + diphosphate. Its pathway is siderophore biosynthesis; bacillibactin biosynthesis. In terms of biological role, specifically adenylates L-threonine and, to a lesser extent, glycine and covalently loads both amino acids onto their corresponding peptidyl carrier domains. The polypeptide is Dimodular nonribosomal peptide synthase (dhbF) (Bacillus subtilis (strain 168)).